We begin with the raw amino-acid sequence, 757 residues long: RNA exonuclease 3 (757 aa).

Disordered stretches follow at residues 56–259 and 474–590; these read VKRE…AEHL and ESLD…CDQA. The span at 120–132 shows a compositional bias: basic and acidic residues; that stretch reads EGGRAEGAEKKEF. 3 stretches are compositionally biased toward polar residues: residues 145–172, 202–223, and 230–240; these read TPHASATPQASVSPQTSAPPQHVSSSVS, QPSSSREPPVSSIDTRTSSSPK, and MTTSASPSQSR. Low complexity-rich tracts occupy residues 244–253 and 474–502; these read RNTSASPSSS and ESLDTSTSTSTSTSATTSAPSAKSTKTAS. Residues 503-516 are compositionally biased toward polar residues; the sequence is RPASTPTKSLTSSL. 2 stretches are compositionally biased toward basic and acidic residues: residues 543–557 and 565–581; these read REPDITLETMKRGIG and SQERSSEPRERSARVRE. Residues 597–751 form the Exonuclease domain; sequence VVAVDCEMLY…EDALAALDVV (155 aa).

Belongs to the REXO1/REXO3 family.

Its subcellular location is the cytoplasm. It localises to the nucleus. Its function is as follows. 3' to 5' exoribonuclease required for proper 3' end maturation of MRP RNA and of the U5L snRNA. This is RNA exonuclease 3 (REX3) from Yarrowia lipolytica (strain CLIB 122 / E 150) (Yeast).